Reading from the N-terminus, the 440-residue chain is C4-dicarboxylate transport protein (440 aa).

8 helical membrane-spanning segments follow: residues 8 to 28, 40 to 60, 74 to 94, 147 to 167, 187 to 207, 221 to 241, 288 to 308, and 354 to 374; these read LYLQ…LFPA, FIKL…VTGI, LKGL…GLVV, GDIL…AALK, IVGF…AFTV, LIAC…GLVL, VVGL…SIYL, and AATL…LLGV. The interval 419-440 is disordered; that stretch reads DEVEPANDPEPPAMAAGLGLHG.

The protein belongs to the dicarboxylate/amino acid:cation symporter (DAACS) (TC 2.A.23) family.

It localises to the cell inner membrane. Responsible for the transport of dicarboxylates such as succinate, fumarate, and malate from the periplasm across the membrane. In Anaeromyxobacter dehalogenans (strain 2CP-C), this protein is C4-dicarboxylate transport protein.